The following is a 162-amino-acid chain: UPF0102 protein Bpet0439 (162 aa).

The disordered stretch occupies residues 15–52; sequence QAQQRQMKRRRAAAHRAARGPAPARAPRASPTQRTGTA. Residues 20 to 32 show a composition bias toward basic residues; that stretch reads QMKRRRAAAHRAA. Residues 33–48 are compositionally biased toward low complexity; it reads RGPAPARAPRASPTQR.

The protein belongs to the UPF0102 family.

This chain is UPF0102 protein Bpet0439, found in Bordetella petrii (strain ATCC BAA-461 / DSM 12804 / CCUG 43448).